We begin with the raw amino-acid sequence, 367 residues long: MSVNRILVINPGSTSTKIGVFDNERPVLEETIRHDVEQIGKYKRIIDQYEFRKETILEVLHSHGINISKLNAVCGRGGLLRPIEGGTYTVNDAMLEDLKNGFSGHHASNLGGILAYEIASGLNIPAFIVDPVVVDEMEPVARISGIAGMERKSIFHALNQKAVARKVAEQLNHKYEDLNLLVTHMGGGITVGAHKKGRVIDVNNGLNGEGPFSPERAGTVPVGQLVEMCFSGEYYRDEMIKKLVGQGGLVSLIDTNDAIKVEQMVEKGDPEATLIYKAMAYQVAKEIGGASAVLHGKIDAIVLTGGLAYSKILVDEIKERVDWIADVIVHPGEDELEALAEGALRVLREEEAPKEYVVREKETVARG.

It belongs to the acetokinase family.

The protein resides in the cytoplasm. It carries out the reaction butanoate + ATP = butanoyl phosphate + ADP. The polypeptide is Probable butyrate kinase (Bacillus cereus (strain B4264)).